Reading from the N-terminus, the 274-residue chain is Penicillin-insensitive murein endopeptidase (274 aa).

The N-terminal stretch at 1 to 19 (MKKTAIALLAWFVSSASLA) is a signal peptide. 3 disulfide bridges follow: Cys-44-Cys-265, Cys-187-Cys-235, and Cys-216-Cys-223. Residues His-110, His-113, Asp-120, Asp-147, His-150, and His-211 each coordinate Zn(2+). The segment at 225-274 (DQPLPPPGDGCGAELQSWFEPPKLGTTKPEKKTPPPLPPSCQALLDEHVL) is disordered.

This sequence belongs to the peptidase M74 family. Dimer. Requires Zn(2+) as cofactor.

It localises to the periplasm. Murein endopeptidase that cleaves the D-alanyl-meso-2,6-diamino-pimelyl amide bond that connects peptidoglycan strands. Likely plays a role in the removal of murein from the sacculus. This is Penicillin-insensitive murein endopeptidase from Salmonella paratyphi B (strain ATCC BAA-1250 / SPB7).